The primary structure comprises 297 residues: 4-hydroxy-tetrahydrodipicolinate synthase (297 aa).

Thr46 is a binding site for pyruvate. Tyr136 serves as the catalytic Proton donor/acceptor. Lys165 functions as the Schiff-base intermediate with substrate in the catalytic mechanism. Residue Thr206 coordinates pyruvate.

This sequence belongs to the DapA family. As to quaternary structure, homotetramer; dimer of dimers.

Its subcellular location is the cytoplasm. It carries out the reaction L-aspartate 4-semialdehyde + pyruvate = (2S,4S)-4-hydroxy-2,3,4,5-tetrahydrodipicolinate + H2O + H(+). It participates in amino-acid biosynthesis; L-lysine biosynthesis via DAP pathway; (S)-tetrahydrodipicolinate from L-aspartate: step 3/4. Its function is as follows. Catalyzes the condensation of (S)-aspartate-beta-semialdehyde [(S)-ASA] and pyruvate to 4-hydroxy-tetrahydrodipicolinate (HTPA). In Sulfurimonas denitrificans (strain ATCC 33889 / DSM 1251) (Thiomicrospira denitrificans (strain ATCC 33889 / DSM 1251)), this protein is 4-hydroxy-tetrahydrodipicolinate synthase.